The following is a 342-amino-acid chain: N-acetyl-gamma-glutamyl-phosphate reductase (342 aa).

C149 is an active-site residue.

Belongs to the NAGSA dehydrogenase family. Type 1 subfamily.

It localises to the cytoplasm. The enzyme catalyses N-acetyl-L-glutamate 5-semialdehyde + phosphate + NADP(+) = N-acetyl-L-glutamyl 5-phosphate + NADPH + H(+). The protein operates within amino-acid biosynthesis; L-arginine biosynthesis; N(2)-acetyl-L-ornithine from L-glutamate: step 3/4. Its function is as follows. Catalyzes the NADPH-dependent reduction of N-acetyl-5-glutamyl phosphate to yield N-acetyl-L-glutamate 5-semialdehyde. The protein is N-acetyl-gamma-glutamyl-phosphate reductase of Nitrosomonas eutropha (strain DSM 101675 / C91 / Nm57).